Here is a 412-residue protein sequence, read N- to C-terminus: Poly-beta-1,6-N-acetyl-D-glucosamine synthase (412 aa).

4 consecutive transmembrane segments (helical) span residues 6–26, 298–318, 332–352, and 366–386; these read FLLF…IYFY, IISI…FITA, IFLL…TVAL, and LIFV…VVLV.

It belongs to the glycosyltransferase 2 family.

Its subcellular location is the cell membrane. In terms of biological role, N-acetylglucosaminyltransferase that catalyzes the polymerization of single monomer units of UDP-N-acetylglucosamine to produce the linear homomer poly-beta-1,6-N-acetyl-D-glucosamine (PNAG, also referred to as PIA), a biofilm adhesin polysaccharide. Requires IcaD for full activity. The sequence is that of Poly-beta-1,6-N-acetyl-D-glucosamine synthase (icaA) from Staphylococcus aureus (strain NCTC 8325 / PS 47).